The primary structure comprises 223 residues: Protein FAM3D (223 aa).

The N-terminal stretch at 1-25 (MRVAGLIRVVVFIFTIVTMWVFLRS) is a signal peptide. Cystine bridges form between Cys-54/Cys-82 and Cys-60/Cys-217. One can recognise a GG-type lectin domain in the interval 62–221 (NNFFAFKISS…LELEGCVPRK (160 aa)). N-linked (GlcNAc...) asparagine glycosylation occurs at Asn-106.

Belongs to the FAM3 family.

Its subcellular location is the secreted. The protein is Protein FAM3D of Mus musculus (Mouse).